A 273-amino-acid polypeptide reads, in one-letter code: Sanguinarine reductase (273 aa).

Ser-153 serves as the catalytic Proton donor. Substrate-binding positions include 157–161 and Lys-175; that span reads CDPDH.

The protein belongs to the NAD(P)-dependent epimerase/dehydratase family. Monomer.

The catalysed reaction is dihydrosanguinarine + NADP(+) = sanguinarine + NADPH. It carries out the reaction dihydrosanguinarine + NAD(+) = sanguinarine + NADH. It catalyses the reaction dihydrochelirubine + NAD(+) = chelirubine + NADH. The enzyme catalyses dihydrochelirubine + NADP(+) = chelirubine + NADPH. With respect to regulation, inhibited by iodoacetamide and irreversibly by its product, dihydrosanguinarine. Catalyzes the reduction of benzophenanthridines, preferentially sanguinarine, to the corresponding dihydroalkaloids. Involved in detoxifying the phytoalexins produced by plant itself. The sanguinarine produced by intact cells upon elicitation, after excretion and binding to cell wall elements, is rapidly reabsorbed and reduced to the less toxic dihydrosanguinarine. Can work with both NAD(P) or NAD as a hydrogen donor, but at low concentrations, the reaction velocity with NAD(P)H is threefold higher than with NADH. However, chelerythrine shows maximum conversion rates with NADH. The substrate preference is sanguinarine &gt; chelerythrine &gt; chelirubine, macarpine or 10-OH-chelerythrine. No activity with berberine or phenanthridine cations. This is Sanguinarine reductase from Eschscholzia californica (California poppy).